A 587-amino-acid polypeptide reads, in one-letter code: Aspartate--tRNA ligase (587 aa).

Residue Glu-174 participates in L-aspartate binding. The tract at residues 198-201 (QITK) is aspartate. Arg-220 is an L-aspartate binding site. ATP contacts are provided by residues 220–222 (RDE) and Gln-229. His-443 contacts L-aspartate. Glu-477 is a binding site for ATP. An L-aspartate-binding site is contributed by Arg-484. Residue 529–532 (GLDR) participates in ATP binding.

Belongs to the class-II aminoacyl-tRNA synthetase family. Type 1 subfamily. In terms of assembly, homodimer.

The protein localises to the cytoplasm. It carries out the reaction tRNA(Asp) + L-aspartate + ATP = L-aspartyl-tRNA(Asp) + AMP + diphosphate. Its function is as follows. Catalyzes the attachment of L-aspartate to tRNA(Asp) in a two-step reaction: L-aspartate is first activated by ATP to form Asp-AMP and then transferred to the acceptor end of tRNA(Asp). The protein is Aspartate--tRNA ligase of Streptococcus pneumoniae (strain Hungary19A-6).